The sequence spans 199 residues: dITP/XTP pyrophosphatase (199 aa).

Ser-7–Lys-12 contacts substrate. The Mg(2+) site is built by Asp-39 and Asp-68. Asp-68 acts as the Proton acceptor in catalysis. Residues Ala-69, Phe-154–Asp-157, Lys-177, and His-182–Arg-183 each bind substrate.

This sequence belongs to the HAM1 NTPase family. Homodimer. Mg(2+) serves as cofactor.

The catalysed reaction is XTP + H2O = XMP + diphosphate + H(+). It catalyses the reaction dITP + H2O = dIMP + diphosphate + H(+). It carries out the reaction ITP + H2O = IMP + diphosphate + H(+). Functionally, pyrophosphatase that catalyzes the hydrolysis of nucleoside triphosphates to their monophosphate derivatives, with a high preference for the non-canonical purine nucleotides XTP (xanthosine triphosphate), dITP (deoxyinosine triphosphate) and ITP. Seems to function as a house-cleaning enzyme that removes non-canonical purine nucleotides from the nucleotide pool, thus preventing their incorporation into DNA/RNA and avoiding chromosomal lesions. The protein is dITP/XTP pyrophosphatase of Paracidovorax citrulli (strain AAC00-1) (Acidovorax citrulli).